A 110-amino-acid chain; its full sequence is UPF0122 protein YlxM (110 aa).

The protein belongs to the UPF0122 family.

Functionally, might take part in the signal recognition particle (SRP) pathway. This is inferred from the conservation of its genetic proximity to ftsY/ffh. May be a regulatory protein. The sequence is that of UPF0122 protein YlxM (ylxM) from Bacillus subtilis (strain 168).